The chain runs to 251 residues: Imidazole glycerol phosphate synthase subunit HisF (251 aa).

Active-site residues include Asp-11 and Asp-130.

The protein belongs to the HisA/HisF family. In terms of assembly, heterodimer of HisH and HisF.

The protein resides in the cytoplasm. The catalysed reaction is 5-[(5-phospho-1-deoxy-D-ribulos-1-ylimino)methylamino]-1-(5-phospho-beta-D-ribosyl)imidazole-4-carboxamide + L-glutamine = D-erythro-1-(imidazol-4-yl)glycerol 3-phosphate + 5-amino-1-(5-phospho-beta-D-ribosyl)imidazole-4-carboxamide + L-glutamate + H(+). It participates in amino-acid biosynthesis; L-histidine biosynthesis; L-histidine from 5-phospho-alpha-D-ribose 1-diphosphate: step 5/9. IGPS catalyzes the conversion of PRFAR and glutamine to IGP, AICAR and glutamate. The HisF subunit catalyzes the cyclization activity that produces IGP and AICAR from PRFAR using the ammonia provided by the HisH subunit. This chain is Imidazole glycerol phosphate synthase subunit HisF, found in Chlorobium phaeovibrioides (strain DSM 265 / 1930) (Prosthecochloris vibrioformis (strain DSM 265)).